The sequence spans 243 residues: ATP synthase subunit a (243 aa).

Transmembrane regions (helical) follow at residues N29 to L49, V54 to I74, V89 to F109, H114 to F134, F141 to I161, L177 to N197, I200 to V220, and A221 to N241.

The protein belongs to the ATPase A chain family. As to quaternary structure, F-type ATPases have 2 components, CF(1) - the catalytic core - and CF(0) - the membrane proton channel. CF(1) has five subunits: alpha(3), beta(3), gamma(1), delta(1), epsilon(1). CF(0) has three main subunits: a(1), b(2) and c(9-12). The alpha and beta chains form an alternating ring which encloses part of the gamma chain. CF(1) is attached to CF(0) by a central stalk formed by the gamma and epsilon chains, while a peripheral stalk is formed by the delta and b chains.

The protein resides in the cell inner membrane. In terms of biological role, key component of the proton channel; it plays a direct role in the translocation of protons across the membrane. In Ehrlichia ruminantium (strain Welgevonden), this protein is ATP synthase subunit a.